Reading from the N-terminus, the 311-residue chain is 4-hydroxyproline 2-epimerase (311 aa).

Residue Cys-89 is the Proton acceptor of the active site. Substrate-binding positions include Gly-90–His-91, His-209, and Asp-233. The active-site Proton donor is Cys-237. Residue Gly-238–Thr-239 coordinates substrate.

Belongs to the proline racemase family.

The enzyme catalyses trans-4-hydroxy-L-proline = cis-4-hydroxy-D-proline. In terms of biological role, catalyzes the epimerization of trans-4-hydroxy-L-proline (t4LHyp) to cis-4-hydroxy-D-proline (c4DHyp). Is likely involved in a degradation pathway that converts t4LHyp to alpha-ketoglutarate. Displays no proline racemase activity. This is 4-hydroxyproline 2-epimerase from Burkholderia ambifaria (strain ATCC BAA-244 / DSM 16087 / CCUG 44356 / LMG 19182 / AMMD) (Burkholderia cepacia (strain AMMD)).